A 909-amino-acid polypeptide reads, in one-letter code: Protein translocase subunit SecA (909 aa).

Residues Gln-87, 105–109, and Asp-514 contribute to the ATP site; that span reads GEGKT. The interval 879–909 is disordered; the sequence is TPVQGGPKVGRNDPCPCGSGKKYKHCHGKLS. Cys-893, Cys-895, Cys-904, and His-905 together coordinate Zn(2+). Residues 899–909 show a composition bias toward basic residues; that stretch reads KKYKHCHGKLS.

The protein belongs to the SecA family. As to quaternary structure, monomer and homodimer. Part of the essential Sec protein translocation apparatus which comprises SecA, SecYEG and auxiliary proteins SecDF-YajC and YidC. Requires Zn(2+) as cofactor.

It localises to the cell inner membrane. The protein resides in the cytoplasm. It catalyses the reaction ATP + H2O + cellular proteinSide 1 = ADP + phosphate + cellular proteinSide 2.. In terms of biological role, part of the Sec protein translocase complex. Interacts with the SecYEG preprotein conducting channel. Has a central role in coupling the hydrolysis of ATP to the transfer of proteins into and across the cell membrane, serving both as a receptor for the preprotein-SecB complex and as an ATP-driven molecular motor driving the stepwise translocation of polypeptide chains across the membrane. The polypeptide is Protein translocase subunit SecA (Azoarcus sp. (strain BH72)).